We begin with the raw amino-acid sequence, 160 residues long: tRNA (cytidine(34)-2'-O)-methyltransferase (160 aa).

Positions 78, 100, 120, and 128 each coordinate S-adenosyl-L-methionine.

It belongs to the class IV-like SAM-binding methyltransferase superfamily. RNA methyltransferase TrmH family. TrmL subfamily. In terms of assembly, homodimer.

The protein resides in the cytoplasm. It catalyses the reaction cytidine(34) in tRNA + S-adenosyl-L-methionine = 2'-O-methylcytidine(34) in tRNA + S-adenosyl-L-homocysteine + H(+). The enzyme catalyses 5-carboxymethylaminomethyluridine(34) in tRNA(Leu) + S-adenosyl-L-methionine = 5-carboxymethylaminomethyl-2'-O-methyluridine(34) in tRNA(Leu) + S-adenosyl-L-homocysteine + H(+). Methylates the ribose at the nucleotide 34 wobble position in the two leucyl isoacceptors tRNA(Leu)(CmAA) and tRNA(Leu)(cmnm5UmAA). Catalyzes the methyl transfer from S-adenosyl-L-methionine to the 2'-OH of the wobble nucleotide. This chain is tRNA (cytidine(34)-2'-O)-methyltransferase, found in Beijerinckia indica subsp. indica (strain ATCC 9039 / DSM 1715 / NCIMB 8712).